Reading from the N-terminus, the 700-residue chain is MASTVEGGDTALLPEFPRGPLDAYRARASFSWKELALFTEGEGMLRFKKTIFSALENDPLFARSPGADLSLEKYRELNFLRCKRIFEYDFLSVEDMFKSPLKVPALIQCLGMYDSSLAAKYLLHSLVFGSAVYSSGSERHLTYIQKIFRMEIFGCFALTELSHGSNTKAIRTTAHYDPATEEFIIHSPDFEAAKFWVGNMGKTATHAVVFAKLCVPGDQCHGLHPFIVQIRDPKTLLPMPGVMVGDIGKKLGQNGLDNGFAMFHKVRVPRQSLLNRMGDVTPEGTYVSPFKDVRQRFGASLGSLSSGRVSIVSLAILNLKLAVAIALRFSATRRQFGPTEEEEIPVLEYPMQQWRLLPYLAAVYALDHFSKSLFLDLVELQRGLASGDRSARQAELGREIHALASASKPLASWTTQQGIQECREACGGHGYLAMNRLGVLRDDNDPNCTYEGDNNILLQQTSNYLLGLLAHQVHDGACFRSPLKSVDFLDAYPGILDQKFEVSSVADCLDSAVALAAYKWLVCYLLRETYQKLNQEKRSGSSDFEARNKCQVSHGRPLALAFVELTVVQRFHEHVHQPSVPPSLRAVLGRLSALYALWSLSRHAALLYRGGYFSGEQAGEVLESAVLALCSQLKDDAVALVDVIAPPDFVLDSPIGRADGELYKNLWGAVLQESKVLERASWWPEFSVNKPVIGSLKSKL.

At Ala-2 the chain carries N-acetylalanine. Position 281 is a phosphothreonine (Thr-281). The short motif at 698 to 700 (SKL) is the Microbody targeting signal element.

Belongs to the acyl-CoA oxidase family. FAD is required as a cofactor.

Its subcellular location is the peroxisome. The enzyme catalyses a 2,3-saturated acyl-CoA + O2 = a (2E)-enoyl-CoA + H2O2. The catalysed reaction is (2S)-pristanoyl-CoA + O2 = (2E)-pristenoyl-CoA + H2O2. It carries out the reaction tetracosanoyl-CoA + O2 = (2E)-tetracosenoyl-CoA + H2O2. It catalyses the reaction hexadecanoyl-CoA + O2 = (2E)-hexadecenoyl-CoA + H2O2. The enzyme catalyses hexadecanedioyl-CoA + O2 = (2E)-hexadecenedioyl-CoA + H2O2. The protein operates within lipid metabolism; peroxisomal fatty acid beta-oxidation. Oxidizes the CoA-esters of 2-methyl-branched fatty acids. This chain is Peroxisomal acyl-coenzyme A oxidase 3 (ACOX3), found in Homo sapiens (Human).